A 359-amino-acid polypeptide reads, in one-letter code: Histidinol-phosphate aminotransferase (359 aa).

The residue at position 217 (lysine 217) is an N6-(pyridoxal phosphate)lysine.

This sequence belongs to the class-II pyridoxal-phosphate-dependent aminotransferase family. Histidinol-phosphate aminotransferase subfamily. Homodimer. The cofactor is pyridoxal 5'-phosphate.

It carries out the reaction L-histidinol phosphate + 2-oxoglutarate = 3-(imidazol-4-yl)-2-oxopropyl phosphate + L-glutamate. It functions in the pathway amino-acid biosynthesis; L-histidine biosynthesis; L-histidine from 5-phospho-alpha-D-ribose 1-diphosphate: step 7/9. This chain is Histidinol-phosphate aminotransferase, found in Citrobacter koseri (strain ATCC BAA-895 / CDC 4225-83 / SGSC4696).